Reading from the N-terminus, the 405-residue chain is Multi-drug resistance efflux pump PmrA homolog (405 aa).

12 helical membrane-spanning segments follow: residues 13–33 (LFITWIGCFFVGSSFSLVMPF), 50–70 (LYSGLAFSLPALASGLVAPIW), 88–108 (IVMTLTMGGIAFAPNVWWLLG), 111–131 (LLMGFFSGYIPNSTAMIASQA), 147–167 (MVSGTLIGPSLGGLLAEWFGM), 170–190 (VFLIVGALLALATLLTIFFVH), 216–236 (ILFGLLVTTFIIQITSQSIEP), 254–274 (FISGLIVSAVGLSAMLSSSFL), 286–306 (LILIGLVFTFIIYLPMAFVQS), 308–328 (LQLGILRFLLGFGTGALTPSV), 350–370 (MCSNLGMVTGPLVGSAIAGYI), and 374–394 (AAIVGTSLFVIVNIIWSFINF).

The protein belongs to the major facilitator superfamily. TCR/Tet family.

Its subcellular location is the cell membrane. In terms of biological role, efflux pump for various substrates. The sequence is that of Multi-drug resistance efflux pump PmrA homolog (pmrA) from Lactococcus lactis subsp. lactis (strain IL1403) (Streptococcus lactis).